The following is a 240-amino-acid chain: 1-(5-phosphoribosyl)-5-[(5-phosphoribosylamino)methylideneamino] imidazole-4-carboxamide isomerase (240 aa).

The active-site Proton acceptor is Asp8. The active-site Proton donor is Asp129.

This sequence belongs to the HisA/HisF family.

It localises to the cytoplasm. The enzyme catalyses 1-(5-phospho-beta-D-ribosyl)-5-[(5-phospho-beta-D-ribosylamino)methylideneamino]imidazole-4-carboxamide = 5-[(5-phospho-1-deoxy-D-ribulos-1-ylimino)methylamino]-1-(5-phospho-beta-D-ribosyl)imidazole-4-carboxamide. The protein operates within amino-acid biosynthesis; L-histidine biosynthesis; L-histidine from 5-phospho-alpha-D-ribose 1-diphosphate: step 4/9. The polypeptide is 1-(5-phosphoribosyl)-5-[(5-phosphoribosylamino)methylideneamino] imidazole-4-carboxamide isomerase (Oceanobacillus iheyensis (strain DSM 14371 / CIP 107618 / JCM 11309 / KCTC 3954 / HTE831)).